Consider the following 127-residue polypeptide: Venom protein family 16 protein 1 (127 aa).

Positions 1-18 (MWIWYSLLFFGVCHLAHS) are cleaved as a signal peptide.

As to expression, expressed by the venom gland (anterior main gland) (at protein level).

The protein resides in the secreted. This Platymeris rhadamanthus (Red spot assassin bug) protein is Venom protein family 16 protein 1.